We begin with the raw amino-acid sequence, 213 residues long: Gas vesicle protein F1 (213 aa).

The protein belongs to the gas vesicle GvpF/GvpL family. Binds GvpA1 in early growth stages; is the only one of GvpF1 to GvpM1 that interacts with GvpA1 in H.volcanii experiments. GvpF to GvpM interact with each other in vitro, and may form multi-subunit complex(es). Interacts with GvpC1 and GvpO1.

The protein localises to the gas vesicle. Its subcellular location is the cytoplasm. Might be involved in preventing aggregation of GvpA1. Proteins GvpF to GvpM might be involved in nucleating gas vesicle formation. A minor component of the gas vesicle, also found in soluble extracts. Gas vesicles are hollow, gas filled proteinaceous nanostructures found in several microbial planktonic microorganisms. They allow positioning of halobacteria at the optimal depth for growth in the poorly aerated, shallow brine pools of their habitat. Functionally, expression of a 9.5 kb p-vac DNA fragment containing 2 divergently transcribed regions (gvpD-gvpE-gvpF-gvpG-gvpH-gvpI-gvpJ-gvpK-gvpL-gvpM and gvpA-gvpC-gvpN-gvpO) allows H.volcanii to produce gas vesicles. A minimal gas vesicle can be made in H.volcanii by gvpA1-gvpO1 plus gvpF1-gvpG1-gvpJ1-gvpK1-gvpL1-gvpM1; lack of enough GvpJ1 prevents formation. The same region restores gas vesicle production in H.halobium without the p-vac locus. The polypeptide is Gas vesicle protein F1 (gvpF11) (Halobacterium salinarum (strain ATCC 700922 / JCM 11081 / NRC-1) (Halobacterium halobium)).